We begin with the raw amino-acid sequence, 605 residues long: Cystathionine gamma-synthase-like enzyme iboG1 (605 aa).

Residue Y289 coordinates substrate. Residue K393 is modified to N6-(pyridoxal phosphate)lysine.

The protein belongs to the trans-sulfuration enzymes family. Requires pyridoxal 5'-phosphate as cofactor.

The protein operates within secondary metabolite biosynthesis. In terms of biological role, cystathionine gamma-synthase-like enzyme; part of the gene cluster that mediates the biosynthesis of the psychoactive metabolites ibotenic acid and muscimol. The first committed step is glutamate hydroxylation by the 2-oxoglutarate-dependent dioxygenase iboH, and the last step is decarboxylation of ibotenic acid to muscimol by the decarboxylase iboD. The order of the intermediate reactions is somewhat ambiguous. IboA likely activates the carboxylic acid at position 5 to introduce an amide bond, and the flavin monooxygenase iboF generates the N-O bond. There are several options for the latter step. One option is that iboF directly hydroxylates the amide nitrogen formed by iboA to produce a hydroxamic acid species. Another option is that iboF hydroxylates an external N-containing compound, whose resulting N-O bond is subsequently introduced into the hydroxyglutamate scaffold. The paralogous PLP-dependent cystathionine gamma-synthase-like enzymes iboG1 and iboG2 are likely involved in substitution of the OH group at position 3 by the O-N moiety. The first cyclic intermediate is most probably tricholomic acid which is likely desaturated to ibotenic acid by the cytochrome P450 monooxygenase iboC. The sequence is that of Cystathionine gamma-synthase-like enzyme iboG1 (iboG1) from Amanita muscaria (strain Koide BX008).